The chain runs to 307 residues: UDP-N-acetylenolpyruvoylglucosamine reductase (307 aa).

The FAD-binding PCMH-type domain maps to 33–197 (TGGNADFYIT…LEAAFTLAPG (165 aa)). Arg176 is a catalytic residue. Ser226 (proton donor) is an active-site residue. Glu296 is a catalytic residue.

Belongs to the MurB family. Requires FAD as cofactor.

The protein resides in the cytoplasm. The catalysed reaction is UDP-N-acetyl-alpha-D-muramate + NADP(+) = UDP-N-acetyl-3-O-(1-carboxyvinyl)-alpha-D-glucosamine + NADPH + H(+). Its pathway is cell wall biogenesis; peptidoglycan biosynthesis. Functionally, cell wall formation. This is UDP-N-acetylenolpyruvoylglucosamine reductase from Staphylococcus aureus (strain MRSA252).